Consider the following 442-residue polypeptide: 3-phosphoshikimate 1-carboxyvinyltransferase (442 aa).

3 residues coordinate 3-phosphoshikimate: Lys25, Ser26, and Arg30. Lys25 is a phosphoenolpyruvate binding site. Residues Gly97 and Arg125 each contribute to the phosphoenolpyruvate site. Residues Ser170, Gln172, Asp323, and Lys350 each contribute to the 3-phosphoshikimate site. Position 172 (Gln172) interacts with phosphoenolpyruvate. Asp323 (proton acceptor) is an active-site residue. Phosphoenolpyruvate-binding residues include Arg354 and Arg399.

The protein belongs to the EPSP synthase family. In terms of assembly, monomer.

It is found in the cytoplasm. The enzyme catalyses 3-phosphoshikimate + phosphoenolpyruvate = 5-O-(1-carboxyvinyl)-3-phosphoshikimate + phosphate. It functions in the pathway metabolic intermediate biosynthesis; chorismate biosynthesis; chorismate from D-erythrose 4-phosphate and phosphoenolpyruvate: step 6/7. Its function is as follows. Catalyzes the transfer of the enolpyruvyl moiety of phosphoenolpyruvate (PEP) to the 5-hydroxyl of shikimate-3-phosphate (S3P) to produce enolpyruvyl shikimate-3-phosphate and inorganic phosphate. The protein is 3-phosphoshikimate 1-carboxyvinyltransferase of Bartonella quintana (strain Toulouse) (Rochalimaea quintana).